Consider the following 321-residue polypeptide: Glucokinase (321 aa).

8 to 13 provides a ligand contact to ATP; the sequence is GDVGGT.

This sequence belongs to the bacterial glucokinase family.

The protein resides in the cytoplasm. The catalysed reaction is D-glucose + ATP = D-glucose 6-phosphate + ADP + H(+). In Klebsiella pneumoniae (strain 342), this protein is Glucokinase.